Here is a 289-residue protein sequence, read N- to C-terminus: Palmitoyl-protein thioesterase 3 (289 aa).

A signal peptide spans 1–20; sequence MRILSSLILLIALAIALVSA. The active site involves Ser-97. 2 N-linked (GlcNAc...) asparagine glycosylation sites follow: Asn-189 and Asn-195. Residues Asp-210 and His-266 contribute to the active site. N-linked (GlcNAc...) asparagine glycosylation occurs at Asn-281.

Belongs to the palmitoyl-protein thioesterase family.

It localises to the lysosome. The catalysed reaction is S-hexadecanoyl-L-cysteinyl-[protein] + H2O = L-cysteinyl-[protein] + hexadecanoate + H(+). In terms of biological role, removes thioester-linked fatty acyl groups such as palmitate from modified cysteine residues in proteins or peptides during lysosomal degradation. The chain is Palmitoyl-protein thioesterase 3 (ppt3) from Dictyostelium discoideum (Social amoeba).